Reading from the N-terminus, the 685-residue chain is Translation initiation factor IF-2 (685 aa).

A disordered region spans residues 60 to 79 (ISLAKTREPSKEKTEAKKPP). Over residues 64–79 (KTREPSKEKTEAKKPP) the composition is skewed to basic and acidic residues. The region spanning 175-352 (NRPPVVTVMG…DIRCIPDSPV (178 aa)) is the tr-type G domain. Positions 184–191 (GHVDHGKT) are G1. 184 to 191 (GHVDHGKT) is a GTP binding site. Positions 209 to 213 (GITQS) are G2. The tract at residues 230–233 (DTPG) is G3. Residues 230–234 (DTPGH) and 284–287 (NKID) contribute to the GTP site. The tract at residues 284–287 (NKID) is G4. Positions 321–323 (SAR) are G5.

The protein belongs to the TRAFAC class translation factor GTPase superfamily. Classic translation factor GTPase family. IF-2 subfamily.

The protein resides in the cytoplasm. In terms of biological role, one of the essential components for the initiation of protein synthesis. Protects formylmethionyl-tRNA from spontaneous hydrolysis and promotes its binding to the 30S ribosomal subunits. Also involved in the hydrolysis of GTP during the formation of the 70S ribosomal complex. This is Translation initiation factor IF-2 from Fervidobacterium nodosum (strain ATCC 35602 / DSM 5306 / Rt17-B1).